Reading from the N-terminus, the 490-residue chain is Adenylosuccinate lyase (490 aa).

Ala-2 bears the N-acetylalanine mark. Residues 26-27, 91-93, and 117-118 each bind substrate; these read RY, RHD, and TS. Lys-153 carries the post-translational modification N6-acetyllysine. His-165 (proton donor/acceptor) is an active-site residue. Gln-247 contacts substrate. Ser-295 functions as the Proton donor/acceptor in the catalytic mechanism. Lys-301 bears the N6-acetyllysine mark. Substrate contacts are provided by Arg-309, Arg-335, Ser-340, and Arg-344. Lys-421 is covalently cross-linked (Glycyl lysine isopeptide (Lys-Gly) (interchain with G-Cter in SUMO1)).

Belongs to the lyase 1 family. Adenylosuccinate lyase subfamily. As to quaternary structure, homotetramer. Residues from neighboring subunits contribute catalytic and substrate-binding residues to each active site.

The catalysed reaction is N(6)-(1,2-dicarboxyethyl)-AMP = fumarate + AMP. The enzyme catalyses (2S)-2-[5-amino-1-(5-phospho-beta-D-ribosyl)imidazole-4-carboxamido]succinate = 5-amino-1-(5-phospho-beta-D-ribosyl)imidazole-4-carboxamide + fumarate. It functions in the pathway purine metabolism; AMP biosynthesis via de novo pathway; AMP from IMP: step 2/2. The protein operates within purine metabolism; IMP biosynthesis via de novo pathway; 5-amino-1-(5-phospho-D-ribosyl)imidazole-4-carboxamide from 5-amino-1-(5-phospho-D-ribosyl)imidazole-4-carboxylate: step 2/2. Catalyzes two non-sequential steps in de novo AMP synthesis: converts (S)-2-(5-amino-1-(5-phospho-D-ribosyl)imidazole-4-carboxamido)succinate (SAICAR) to fumarate plus 5-amino-1-(5-phospho-D-ribosyl)imidazole-4-carboxamide, and thereby also contributes to de novo IMP synthesis, and converts succinyladenosine monophosphate (SAMP) to AMP and fumarate. This is Adenylosuccinate lyase (ADSL) from Bos taurus (Bovine).